We begin with the raw amino-acid sequence, 515 residues long: Ecdysteroid UDP-glucosyltransferase (515 aa).

A signal peptide spans 1-31 (MKMIILVVSLHVLRNSAAVRVLCMFPTPSYS).

This sequence belongs to the UDP-glycosyltransferase family.

Catalyzes the transfer of glucose from UDP-glucose to ecdysteroids which are insect molting hormones. Expression of egt interferes with normal insect development and block molting. The polypeptide is Ecdysteroid UDP-glucosyltransferase (EGT) (Spodoptera littoralis nuclear polyhedrosis virus (SlNPV)).